Here is a 371-residue protein sequence, read N- to C-terminus: tRNA-specific 2-thiouridylase MnmA 2 (371 aa).

ATP-binding positions include 13 to 20 (GMSGGVDS) and methionine 39. The tract at residues 99–101 (NPD) is interaction with target base in tRNA. The active-site Nucleophile is the cysteine 104. Residues cysteine 104 and cysteine 200 are joined by a disulfide bond. ATP is bound at residue glycine 128. The segment at 150 to 152 (KDQ) is interaction with tRNA. The Cysteine persulfide intermediate role is filled by cysteine 200. Residues 308–309 (RY) form an interaction with tRNA region.

It belongs to the MnmA/TRMU family.

Its subcellular location is the cytoplasm. It catalyses the reaction S-sulfanyl-L-cysteinyl-[protein] + uridine(34) in tRNA + AH2 + ATP = 2-thiouridine(34) in tRNA + L-cysteinyl-[protein] + A + AMP + diphosphate + H(+). Catalyzes the 2-thiolation of uridine at the wobble position (U34) of tRNA, leading to the formation of s(2)U34. This is tRNA-specific 2-thiouridylase MnmA 2 from Geobacillus kaustophilus (strain HTA426).